Consider the following 353-residue polypeptide: UDP-N-acetylglucosamine--N-acetylmuramyl-(pentapeptide) pyrophosphoryl-undecaprenol N-acetylglucosamine transferase (353 aa).

UDP-N-acetyl-alpha-D-glucosamine-binding positions include 10-12, N124, S183, and Q283; that span reads TGG.

It belongs to the glycosyltransferase 28 family. MurG subfamily.

The protein localises to the cell inner membrane. The catalysed reaction is di-trans,octa-cis-undecaprenyl diphospho-N-acetyl-alpha-D-muramoyl-L-alanyl-D-glutamyl-meso-2,6-diaminopimeloyl-D-alanyl-D-alanine + UDP-N-acetyl-alpha-D-glucosamine = di-trans,octa-cis-undecaprenyl diphospho-[N-acetyl-alpha-D-glucosaminyl-(1-&gt;4)]-N-acetyl-alpha-D-muramoyl-L-alanyl-D-glutamyl-meso-2,6-diaminopimeloyl-D-alanyl-D-alanine + UDP + H(+). Its pathway is cell wall biogenesis; peptidoglycan biosynthesis. In terms of biological role, cell wall formation. Catalyzes the transfer of a GlcNAc subunit on undecaprenyl-pyrophosphoryl-MurNAc-pentapeptide (lipid intermediate I) to form undecaprenyl-pyrophosphoryl-MurNAc-(pentapeptide)GlcNAc (lipid intermediate II). In Helicobacter pylori (strain G27), this protein is UDP-N-acetylglucosamine--N-acetylmuramyl-(pentapeptide) pyrophosphoryl-undecaprenol N-acetylglucosamine transferase.